The following is a 307-amino-acid chain: Dihydroorotate dehydrogenase A (fumarate) (307 aa).

Residues Ser21 and 46–47 contribute to the FMN site; that span reads KT. Residues Lys46, 70 to 74, and Asn130 contribute to the substrate site; that span reads NSVGL. Asn130 contacts FMN. Cys133 (nucleophile) is an active-site residue. Residues Lys168 and Ile194 each coordinate FMN. Residue 195–196 coordinates substrate; sequence NT. FMN is bound by residues Gly220, 246 to 247, and 268 to 269; these read GG and GS.

Belongs to the dihydroorotate dehydrogenase family. Type 1 subfamily. As to quaternary structure, homodimer. The cofactor is FMN.

The protein localises to the cytoplasm. The enzyme catalyses (S)-dihydroorotate + fumarate = orotate + succinate. The protein operates within pyrimidine metabolism; UMP biosynthesis via de novo pathway. Catalyzes the conversion of dihydroorotate to orotate with fumarate as the electron acceptor. The chain is Dihydroorotate dehydrogenase A (fumarate) (pyrD) from Lactobacillus delbrueckii subsp. bulgaricus (strain ATCC BAA-365 / Lb-18).